Here is a 308-residue protein sequence, read N- to C-terminus: uncharacterized protein (308 aa).

The signal sequence occupies residues 1 to 28 (MILMKKFEIILFLFIAVLIFVFGYFVGA).

This is an uncharacterized protein from Methanocaldococcus jannaschii (strain ATCC 43067 / DSM 2661 / JAL-1 / JCM 10045 / NBRC 100440) (Methanococcus jannaschii).